A 474-amino-acid chain; its full sequence is MSFPLIFERSRKGRRGLKLVKAVPKAEDLIPKEHLREVPPRLPEVDELTLVRHYTGLSRRQVGVDTTFYPLGSCTMKYNPKLHEEAARLFADLHPYQDPRTAQGALRLMWELGEYLKALTGMDAITLEPAAGAHGELTGILIIRAYHEDRGEGRTRRVVLVPDSAHGSNPATASMAGYQVREIPSGPEGEVDLEALKRELGPHVAALMLTNPNTLGLFERRILEISRLCKEAGVQLYYDGANLNAIMGWARPGDMGFDVVHLNLHKTFTVPHGGGGPGSGPVGVKAHLAPYLPVPLVERGEEGFYLDFDRPKSIGRVRSFYGNFLALVRAWAYIRTLGLEGLKKAAALAVLNARYLKELLKEKGYRVPYDGPSMHEFVAQPPEGFRALDLAKGLLELGFHPPTVYFPLIVKEALMVEPTETEAKETLEAFAEAMGALLKKPKEWLENAPYSTPVRRLDELRANKHPKLTYFDEG.

The residue at position 266 (K266) is an N6-(pyridoxal phosphate)lysine.

The protein belongs to the GcvP family. C-terminal subunit subfamily. As to quaternary structure, the glycine cleavage system is composed of four proteins: P, T, L and H. In this organism, the P 'protein' is a heterodimer of two subunits. Pyridoxal 5'-phosphate serves as cofactor.

The catalysed reaction is N(6)-[(R)-lipoyl]-L-lysyl-[glycine-cleavage complex H protein] + glycine + H(+) = N(6)-[(R)-S(8)-aminomethyldihydrolipoyl]-L-lysyl-[glycine-cleavage complex H protein] + CO2. Its function is as follows. The glycine cleavage system catalyzes the degradation of glycine. The P protein binds the alpha-amino group of glycine through its pyridoxal phosphate cofactor; CO(2) is released and the remaining methylamine moiety is then transferred to the lipoamide cofactor of the H protein. The chain is Probable glycine dehydrogenase (decarboxylating) subunit 2 from Thermus thermophilus (strain ATCC 27634 / DSM 579 / HB8).